The sequence spans 236 residues: Flagellar L-ring protein (236 aa).

The signal sequence occupies residues 1-24 (MKNKNRLNTIKLLSISLLIAVTTA). The N-palmitoyl cysteine moiety is linked to residue cysteine 25. Cysteine 25 carries the S-diacylglycerol cysteine lipid modification.

It belongs to the FlgH family. The basal body constitutes a major portion of the flagellar organelle and consists of four rings (L,P,S, and M) mounted on a central rod.

Its subcellular location is the cell outer membrane. It is found in the bacterial flagellum basal body. Assembles around the rod to form the L-ring and probably protects the motor/basal body from shearing forces during rotation. This is Flagellar L-ring protein from Colwellia psychrerythraea (strain 34H / ATCC BAA-681) (Vibrio psychroerythus).